We begin with the raw amino-acid sequence, 384 residues long: Guanine nucleotide-binding protein alpha-2 subunit (384 aa).

The interval 1–23 (MGLVCSRNRRYRDSDPEENAQAA) is disordered. G2 carries N-myristoyl glycine lipidation. A lipid anchor (S-palmitoyl cysteine) is attached at C5. The G-alpha domain occupies 38-384 (HIQKLLLLGA…RRNLFEAGLL (347 aa)). Positions 41-54 (KLLLLGAGESGKST) are G1 motif. The GTP site is built by E49, S50, G51, K52, S53, T54, D163, L188, Y189, T194, G222, N288, K289, D291, and A356. Mg(2+) is bound at residue S53. A G2 motif region spans residues 186-194 (DVLYARVRT). T194 contributes to the Mg(2+) binding site. Residues 215–224 (YRLFDVGGQR) are G3 motif. Residues 284-291 (MLFLNKFD) form a G4 motif region. The segment at 354–359 (TTALDQ) is G5 motif.

Belongs to the G-alpha family. In terms of assembly, g proteins are composed of 3 units; alpha, beta and gamma. The alpha chain contains the guanine nucleotide binding site. Mg(2+) serves as cofactor.

In terms of biological role, guanine nucleotide-binding proteins (G proteins) are involved as modulators or transducers in various transmembrane signaling systems. The chain is Guanine nucleotide-binding protein alpha-2 subunit (GPA2) from Pisum sativum (Garden pea).